We begin with the raw amino-acid sequence, 91 residues long: Elongation factor 1-beta (91 aa).

Homodimer.

Functionally, promotes the exchange of GDP for GTP in EF-1-alpha/GDP, thus allowing the regeneration of EF-1-alpha/GTP that could then be used to form the ternary complex EF-1-alpha/GTP/AAtRNA. The polypeptide is Elongation factor 1-beta (ef1b) (Saccharolobus solfataricus (strain ATCC 35092 / DSM 1617 / JCM 11322 / P2) (Sulfolobus solfataricus)).